The following is a 574-amino-acid chain: Glycine--tRNA ligase (574 aa).

The substrate site is built by Arg-96 and Glu-162. ATP contacts are provided by residues 194 to 196 (RNE), 204 to 209 (IRLREF), 327 to 328 (EC), and 450 to 453 (GIDR). 209 to 213 (FTQAE) contacts substrate. A substrate-binding site is contributed by 446–450 (EPSYG).

It belongs to the class-II aminoacyl-tRNA synthetase family.

It is found in the cytoplasm. It catalyses the reaction tRNA(Gly) + glycine + ATP = glycyl-tRNA(Gly) + AMP + diphosphate. Catalyzes the attachment of glycine to tRNA(Gly). This is Glycine--tRNA ligase from Methanococcus maripaludis (strain C6 / ATCC BAA-1332).